The chain runs to 320 residues: Lipoyl synthase (320 aa).

Positions 1–24 (MIGKLVRDLKIPDQRHPEKAHRPD) are enriched in basic and acidic residues. The segment at 1 to 30 (MIGKLVRDLKIPDQRHPEKAHRPDNVQPKK) is disordered. [4Fe-4S] cluster is bound by residues Cys-60, Cys-65, Cys-71, Cys-86, Cys-90, Cys-93, and Ser-300. The Radical SAM core domain occupies 72–289 (WSQGHATMMI…EKAAYGKGFL (218 aa)).

The protein belongs to the radical SAM superfamily. Lipoyl synthase family. The cofactor is [4Fe-4S] cluster.

The protein resides in the cytoplasm. It catalyses the reaction [[Fe-S] cluster scaffold protein carrying a second [4Fe-4S](2+) cluster] + N(6)-octanoyl-L-lysyl-[protein] + 2 oxidized [2Fe-2S]-[ferredoxin] + 2 S-adenosyl-L-methionine + 4 H(+) = [[Fe-S] cluster scaffold protein] + N(6)-[(R)-dihydrolipoyl]-L-lysyl-[protein] + 4 Fe(3+) + 2 hydrogen sulfide + 2 5'-deoxyadenosine + 2 L-methionine + 2 reduced [2Fe-2S]-[ferredoxin]. It functions in the pathway protein modification; protein lipoylation via endogenous pathway; protein N(6)-(lipoyl)lysine from octanoyl-[acyl-carrier-protein]: step 2/2. Functionally, catalyzes the radical-mediated insertion of two sulfur atoms into the C-6 and C-8 positions of the octanoyl moiety bound to the lipoyl domains of lipoate-dependent enzymes, thereby converting the octanoylated domains into lipoylated derivatives. This Cereibacter sphaeroides (strain ATCC 17029 / ATH 2.4.9) (Rhodobacter sphaeroides) protein is Lipoyl synthase.